The chain runs to 645 residues: MVLAMASQDVQNFFQPFSSWISRVYEALQQAGDMLSASLVNISKQDSKLSDKLDQDLDNIQIQETYFEDEEQDNDWSQEDANSLFLEVDHFSCCNSDLQDSAQNSSPSLSQHAKDSCSTMSQWPNWASDDRKLPHVLSSIAEEEHHLEKQRSGLQHGFDSQLPGTLETVNGKKQVNSFGDDEELSTSSDSDEEVIKQFEISVSRSQSFRSVTSEKGKQTGLEQKPKFSRSLLTHGEDGTEVSACEDLDGASQRRYSENLSYGEDDHIPAHSQSPCERGDAKHHGTSHQESSVVQSLRRQSTEGSLEMETAFNSRGFEDSYATDSSSMWSPEEQDRTNLQVPSGVSEPISKCGDLDVIFEYRAASQKLTVTIVRAQGLPDKDRSGVNSWQVHVVLLPGKKHRGRTNIQRGPNPVFREKVTFAKLEPRDVAACAVRFRLYAARKMTRERMMGEKLFYLSHLHPEGEMKVTLVLEPRSNISSGGSPLSPSAVSHSDSTSSTQSLSHGGAPELLVGLSYNATTGRLSVEMIKGSHFRNLAVNRAPDTYGKLFLLNSVGQEMSRCKTSIRRGQPNPVYKETFVFQVALFQLSDVTLMISVYNRRTMKRKEMIGWIALGQNSSGEEEQDHWEEMKETKGQQICRWHTLLES.

3 disordered regions span residues 102–121 (AQNS…STMS), 144–192 (EHHL…DSDE), and 206–344 (QSFR…PSGV). Over residues 167-177 (ETVNGKKQVNS) the composition is skewed to polar residues. Over residues 179–192 (GDDEELSTSSDSDE) the composition is skewed to acidic residues. The segment covering 287-303 (HQESSVVQSLRRQSTEG) has biased composition (polar residues). Residues 350–469 (KCGDLDVIFE…HPEGEMKVTL (120 aa)) form the C2 1 domain. Positions 478-503 (SSGGSPLSPSAVSHSDSTSSTQSLSH) are disordered. Residues 485 to 502 (SPSAVSHSDSTSSTQSLS) are compositionally biased toward low complexity. In terms of domain architecture, C2 2 spans 505–640 (GAPELLVGLS…TKGQQICRWH (136 aa)).

The protein belongs to the synaptotagmin family. In terms of assembly, homodimer. Can also form heterodimers. In terms of tissue distribution, expressed in brain.

May be involved in the trafficking and exocytosis of secretory vesicles in non-neuronal tissues. Is Ca(2+)-independent. This Homo sapiens (Human) protein is Synaptotagmin-16 (SYT16).